A 201-amino-acid polypeptide reads, in one-letter code: 3-isopropylmalate dehydratase small subunit (201 aa).

It belongs to the LeuD family. LeuD type 1 subfamily. Heterodimer of LeuC and LeuD.

The enzyme catalyses (2R,3S)-3-isopropylmalate = (2S)-2-isopropylmalate. The protein operates within amino-acid biosynthesis; L-leucine biosynthesis; L-leucine from 3-methyl-2-oxobutanoate: step 2/4. Functionally, catalyzes the isomerization between 2-isopropylmalate and 3-isopropylmalate, via the formation of 2-isopropylmaleate. In Rhodopseudomonas palustris (strain BisB18), this protein is 3-isopropylmalate dehydratase small subunit.